Reading from the N-terminus, the 182-residue chain is Dual-action ribosomal maturation protein DarP (182 aa).

It belongs to the DarP family.

Its subcellular location is the cytoplasm. In terms of biological role, member of a network of 50S ribosomal subunit biogenesis factors which assembles along the 30S-50S interface, preventing incorrect 23S rRNA structures from forming. Promotes peptidyl transferase center (PTC) maturation. The sequence is that of Dual-action ribosomal maturation protein DarP from Serratia proteamaculans (strain 568).